Consider the following 455-residue polypeptide: Proline--tRNA ligase (455 aa).

The L-proline site is built by T101, E103, and R132. Residues R132, E134, Q216, and T219 each contribute to the ATP site. H221 contacts L-proline. 2 residues coordinate ATP: S253 and R255. The tract at residues 329-359 (EIKGVPLRIEVGPKDIENKKITLFRRDTMEK) is interaction with tRNA.

This sequence belongs to the class-II aminoacyl-tRNA synthetase family. ProS type 3 subfamily. As to quaternary structure, homodimer. The dimer is functionally asymmetric: only one of the two active sites at a time is able to form prolyl-adenylate, and only one tRNA molecule binds per dimer.

It is found in the cytoplasm. It catalyses the reaction tRNA(Pro) + L-proline + ATP = L-prolyl-tRNA(Pro) + AMP + diphosphate. With respect to regulation, inhibited by high concentrations of prolinamide. Its function is as follows. Catalyzes the attachment of proline to tRNA(Pro) in a two-step reaction: proline is first activated by ATP to form Pro-AMP and then transferred to the acceptor end of tRNA(Pro). Can inadvertently accommodate and process non-cognate amino acids such as cysteine and alanine. The polypeptide is Proline--tRNA ligase (proS) (Methanocaldococcus jannaschii (strain ATCC 43067 / DSM 2661 / JAL-1 / JCM 10045 / NBRC 100440) (Methanococcus jannaschii)).